Here is a 196-residue protein sequence, read N- to C-terminus: FKBP-type peptidyl-prolyl cis-trans isomerase SlyD (196 aa).

The PPIase first part stretch occupies residues 1–69 (MKVAKDLVVS…VAVGANDAYG (69 aa)). The region spanning 1-95 (MKVAKDLVVS…GVDELQVGMR (95 aa)) is the PPIase FKBP-type domain. The IF-chaperone stretch occupies residues 76–120 (VQRVPKDVFMGVDELQVGMRFLAETDQGPVPVEITAVEDDHVVVD). Residues 129 to 151 (NLKFNVEVVAIREATEEELAHGH) are PPIase second part. Positions 167, 168, 184, 185, 193, and 195 each coordinate Ni(2+).

It belongs to the FKBP-type PPIase family. In terms of assembly, monomer. Binds to a broad range of unrelated Tat signal sequences. Interacts with the hydrogenase nickel incorporation protein HypB.

It localises to the cytoplasm. It catalyses the reaction [protein]-peptidylproline (omega=180) = [protein]-peptidylproline (omega=0). In terms of biological role, folding helper with both chaperone and peptidyl-prolyl cis-trans isomerase (PPIase) activities. Chaperone activity prevents aggregation of unfolded or partially folded proteins and promotes their correct folding. PPIases catalyze the cis-trans isomerization of Xaa-Pro bonds of peptides, which accelerates slow steps of protein folding and thus shortens the lifetime of intermediates. Both strategies lower the concentration of intermediates and increase the productivity and yield of the folding reaction. SlyD could be involved in Tat-dependent translocation, by binding to the Tat-type signal of folded proteins. Functionally, also involved in hydrogenase metallocenter assembly, probably by participating in the nickel insertion step. This function in hydrogenase biosynthesis requires chaperone activity and the presence of the metal-binding domain, but not PPIase activity. The chain is FKBP-type peptidyl-prolyl cis-trans isomerase SlyD (slyD) from Escherichia coli O157:H7.